Reading from the N-terminus, the 1343-residue chain is DNA-directed RNA polymerase subunit beta (1343 aa).

It belongs to the RNA polymerase beta chain family. The RNAP catalytic core consists of 2 alpha, 1 beta, 1 beta' and 1 omega subunit. When a sigma factor is associated with the core the holoenzyme is formed, which can initiate transcription.

The enzyme catalyses RNA(n) + a ribonucleoside 5'-triphosphate = RNA(n+1) + diphosphate. Its function is as follows. DNA-dependent RNA polymerase catalyzes the transcription of DNA into RNA using the four ribonucleoside triphosphates as substrates. This chain is DNA-directed RNA polymerase subunit beta, found in Shewanella baltica (strain OS223).